Here is a 131-residue protein sequence, read N- to C-terminus: Small ribosomal subunit protein bS6 (131 aa).

A disordered region spans residues 96–131 (VTAPSPMMKEEKSKSLLAKDEAAAPAPAPATEQATA). Positions 103 to 117 (MKEEKSKSLLAKDEA) are enriched in basic and acidic residues. Residues 118–131 (AAPAPAPATEQATA) are compositionally biased toward low complexity.

The protein belongs to the bacterial ribosomal protein bS6 family.

Binds together with bS18 to 16S ribosomal RNA. The sequence is that of Small ribosomal subunit protein bS6 from Methylobacillus flagellatus (strain ATCC 51484 / DSM 6875 / VKM B-1610 / KT).